The sequence spans 142 residues: Transcriptional regulator MraZ (142 aa).

SpoVT-AbrB domains are found at residues 5 to 51 (ASAL…PRPE) and 77 to 120 (AADV…DAAT).

It belongs to the MraZ family. In terms of assembly, forms oligomers.

Its subcellular location is the cytoplasm. The protein localises to the nucleoid. This is Transcriptional regulator MraZ from Cupriavidus taiwanensis (strain DSM 17343 / BCRC 17206 / CCUG 44338 / CIP 107171 / LMG 19424 / R1) (Ralstonia taiwanensis (strain LMG 19424)).